Consider the following 215-residue polypeptide: Ribonuclease T (215 aa).

In terms of domain architecture, Exonuclease spans 20 to 194 (VVIDVETAGF…YDTERTAVLF (175 aa)). Residues Asp23, Glu25, His181, and Asp186 each contribute to the Mg(2+) site. The active-site Proton donor/acceptor is the His181.

The protein belongs to the RNase T family. As to quaternary structure, homodimer. Requires Mg(2+) as cofactor.

In terms of biological role, trims short 3' overhangs of a variety of RNA species, leaving a one or two nucleotide 3' overhang. Responsible for the end-turnover of tRNA: specifically removes the terminal AMP residue from uncharged tRNA (tRNA-C-C-A). Also appears to be involved in tRNA biosynthesis. The protein is Ribonuclease T of Shigella boydii serotype 4 (strain Sb227).